A 108-amino-acid chain; its full sequence is Parvalbumin alpha (108 aa).

A1 bears the N-acetylalanine mark. EF-hand domains follow at residues 37–72 (MSAN…FAAD) and 76–108 (LTDA…VHEA). Ca(2+)-binding residues include D50, D52, S54, F56, E58, E61, D89, D91, D93, K95, and E100.

This sequence belongs to the parvalbumin family.

Functionally, in muscle, parvalbumin is thought to be involved in relaxation after contraction. It binds two calcium ions. In Esox lucius (Northern pike), this protein is Parvalbumin alpha.